We begin with the raw amino-acid sequence, 384 residues long: Putative 8-amino-7-oxononanoate synthase (384 aa).

Arg19 contributes to the substrate binding site. 106 to 107 (GY) is a binding site for pyridoxal 5'-phosphate. His131 contacts substrate. Residues Ser177, 202–205 (DDAH), and 233–236 (TLSK) each bind pyridoxal 5'-phosphate. An N6-(pyridoxal phosphate)lysine modification is found at Lys236.

It belongs to the class-II pyridoxal-phosphate-dependent aminotransferase family. BioF subfamily. In terms of assembly, homodimer. Pyridoxal 5'-phosphate serves as cofactor.

It catalyses the reaction 6-carboxyhexanoyl-[ACP] + L-alanine + H(+) = (8S)-8-amino-7-oxononanoate + holo-[ACP] + CO2. It participates in cofactor biosynthesis; biotin biosynthesis. Functionally, catalyzes the decarboxylative condensation of pimeloyl-[acyl-carrier protein] and L-alanine to produce 8-amino-7-oxononanoate (AON), [acyl-carrier protein], and carbon dioxide. The protein is Putative 8-amino-7-oxononanoate synthase (bioF) of Desulforudis audaxviator (strain MP104C).